The primary structure comprises 253 residues: uncharacterized protein (253 aa).

The interval D211–P235 is disordered. Residues P218–S229 show a composition bias toward polar residues.

This is an uncharacterized protein from Mycobacterium tuberculosis (strain CDC 1551 / Oshkosh).